The sequence spans 335 residues: MDQMSPDNINGVILAVSSSIFIGSSFIIKKKGLKKAGASGVRAGEGGYGYLKEPWWWAGMITMIVGEVANFAAYAFAPAILVTPLGALSIIFSAVLAHFILKEKLHMFGILGCILCVVGSTTIVLHAPHEQKIESVKQIWQLAIEPGFLVYSAVIVIVVAILIFYYEPRYGKTHMIVYVGICSLMGSLTVMSVKAVAIAIKLTFSGTNQFKYFNTWIFILVVATCCILQINYLNKALDTFNTAVISPVYYVMFTTFTIIASMIMFKDWASQSGLKIATELCGFVTILSGTFLLHKTKDMGNSASGRGSISMPTRDTPVFTNSGSGRSSSSDKVAS.

The Extracellular segment spans residues 1-7; that stretch reads MDQMSPD. Residues 8 to 28 form a helical membrane-spanning segment; that stretch reads NINGVILAVSSSIFIGSSFII. Residues 29-55 lie on the Cytoplasmic side of the membrane; it reads KKKGLKKAGASGVRAGEGGYGYLKEPW. The chain crosses the membrane as a helical span at residues 56–76; it reads WWAGMITMIVGEVANFAAYAF. Residues 77 to 79 lie on the Extracellular side of the membrane; that stretch reads APA. Residues 80–100 form a helical membrane-spanning segment; it reads ILVTPLGALSIIFSAVLAHFI. Residues 101–104 are Cytoplasmic-facing; sequence LKEK. Residues 105 to 125 form a helical membrane-spanning segment; that stretch reads LHMFGILGCILCVVGSTTIVL. Residues 126–143 lie on the Extracellular side of the membrane; that stretch reads HAPHEQKIESVKQIWQLA. The chain crosses the membrane as a helical span at residues 144-164; the sequence is IEPGFLVYSAVIVIVVAILIF. The Cytoplasmic segment spans residues 165-179; sequence YYEPRYGKTHMIVYV. The helical transmembrane segment at 180–200 threads the bilayer; sequence GICSLMGSLTVMSVKAVAIAI. The Extracellular segment spans residues 201 to 212; sequence KLTFSGTNQFKY. Residues 213–233 traverse the membrane as a helical segment; it reads FNTWIFILVVATCCILQINYL. The Cytoplasmic portion of the chain corresponds to 234–244; sequence NKALDTFNTAV. A helical membrane pass occupies residues 245–265; that stretch reads ISPVYYVMFTTFTIIASMIMF. The Extracellular segment spans residues 266 to 272; the sequence is KDWASQS. The chain crosses the membrane as a helical span at residues 273 to 293; sequence GLKIATELCGFVTILSGTFLL. The Cytoplasmic segment spans residues 294–335; sequence HKTKDMGNSASGRGSISMPTRDTPVFTNSGSGRSSSSDKVAS. The span at 303–321 shows a compositional bias: polar residues; that stretch reads ASGRGSISMPTRDTPVFTN. Positions 303–335 are disordered; sequence ASGRGSISMPTRDTPVFTNSGSGRSSSSDKVAS. The span at 322–335 shows a compositional bias: low complexity; that stretch reads SGSGRSSSSDKVAS.

Belongs to the NIPA (TC 2.A.7) family. As to quaternary structure, homodimer.

It is found in the cell membrane. It localises to the early endosome. Acts as a Mg(2+) transporter. Can also transport other divalent cations such as Fe(2+), Sr(2+), Ba(2+), Mn(2+) and Co(2+) but to a much less extent than Mg(2+). The sequence is that of Probable magnesium transporter NIPA1 from Arabidopsis thaliana (Mouse-ear cress).